The chain runs to 415 residues: MEKLQAQYCYLCSENIRKTNPFILNILQKLDEEIEKRPKEKFTVNIAGNNRLDSGQRITGEDFWLLSKTLRNQPCISGVDVRYNLIGDVGAFYAAKLLQKQPSITYLNLMFNDIGPEGGELIAKALHKNKTLKYLRMTGNKIENTGGMLFAAMLQMNSSLEKLDLGDCDLGLQCVIAFSTVLTQNQAIKGINLNRPILYGEQEESTVHIGHMLKENHVLVELHMCKHGMKNYGLQQLCNALYLNSSLRYLDVSCNKITRDGMVFLADVLKSNTTLEVLDLSFNRIETAGAKYLSETLTSHNRSLKALSVVSNKIEGEGLVALSQSMKTNLVLSNIYIWGNKFDEDTCVAYSDLIKSGRLKPDNTDVEPYMVDEHIYLSEVSNGLKRHYYWAPTYGETYMPSSSAGFALVPVGEHL.

LRR repeat units follow at residues 246–272 (SLRY…LKSN) and 274–296 (TLEV…LSET).

Interacts with NPM1 and NCL. Expressed in testis where it specifically localizes to germ cells (at protein level). Not detected in other tissues tested (at protein level). Expressed in pluripotent embryonic stem cells and multipotent adult germline stem cells.

Its subcellular location is the nucleus. It localises to the nucleolus. The protein resides in the cytoplasm. In terms of biological role, highly expressed in stem cells where it may be involved in regulation of pluripotency. In embryonic stem cells (ESCs), important for normal expression of the pluripotency regulators POU5F1/OCT4 and KLF4. Also important for expression of the ectodermal marker gene NES and the endodermal marker gene GATA4. Promotes stem cell proliferation in vitro. The chain is Leucine-rich repeat-containing protein 34 from Mus musculus (Mouse).